The sequence spans 368 residues: tRNA 2-selenouridine synthase (368 aa).

The 124-residue stretch at 15–138 (FLNQHPIMDV…MRQYLIGVIE (124 aa)) folds into the Rhodanese domain. Cys98 functions as the S-selanylcysteine intermediate in the catalytic mechanism.

Belongs to the SelU family. As to quaternary structure, monomer.

It carries out the reaction 5-methylaminomethyl-2-thiouridine(34) in tRNA + selenophosphate + (2E)-geranyl diphosphate + H2O + H(+) = 5-methylaminomethyl-2-selenouridine(34) in tRNA + (2E)-thiogeraniol + phosphate + diphosphate. The enzyme catalyses 5-methylaminomethyl-2-thiouridine(34) in tRNA + (2E)-geranyl diphosphate = 5-methylaminomethyl-S-(2E)-geranyl-thiouridine(34) in tRNA + diphosphate. It catalyses the reaction 5-methylaminomethyl-S-(2E)-geranyl-thiouridine(34) in tRNA + selenophosphate + H(+) = 5-methylaminomethyl-2-(Se-phospho)selenouridine(34) in tRNA + (2E)-thiogeraniol. The catalysed reaction is 5-methylaminomethyl-2-(Se-phospho)selenouridine(34) in tRNA + H2O = 5-methylaminomethyl-2-selenouridine(34) in tRNA + phosphate. Its function is as follows. Involved in the post-transcriptional modification of the uridine at the wobble position (U34) of tRNA(Lys), tRNA(Glu) and tRNA(Gln). Catalyzes the conversion of 2-thiouridine (S2U-RNA) to 2-selenouridine (Se2U-RNA). Acts in a two-step process involving geranylation of 2-thiouridine (S2U) to S-geranyl-2-thiouridine (geS2U) and subsequent selenation of the latter derivative to 2-selenouridine (Se2U) in the tRNA chain. This is tRNA 2-selenouridine synthase from Shewanella baltica (strain OS155 / ATCC BAA-1091).